The sequence spans 310 residues: Cytochrome f (310 aa).

A signal peptide spans 1 to 26 (MNIKLTLLVLISIINLMIIQPIQTLA). Residues F27, C47, C50, and H51 each contribute to the heme site. The chain crosses the membrane as a helical span at residues 276–296 (IKGMIVFFFTVTIAQIFFVLK).

This sequence belongs to the cytochrome f family. The 4 large subunits of the cytochrome b6-f complex are cytochrome b6, subunit IV (17 kDa polypeptide, petD), cytochrome f and the Rieske protein, while the 4 small subunits are PetG, PetL, PetM and PetN. The complex functions as a dimer. It depends on heme as a cofactor.

It is found in the plastid. It localises to the chloroplast thylakoid membrane. In terms of biological role, component of the cytochrome b6-f complex, which mediates electron transfer between photosystem II (PSII) and photosystem I (PSI), cyclic electron flow around PSI, and state transitions. This chain is Cytochrome f, found in Gracilaria tenuistipitata var. liui (Red alga).